A 372-amino-acid chain; its full sequence is MRSKVTGAKRWVVKIGSALLTADGKGLDRGAMAVWVEQMVALREAGVELVLVSSGAVAAGMSQLGWTTRPSAMNELQAAASLGQMRLVQAWESSFGEHGKHTAQILLTHDDLSDRKRYLNARSTLRTLVDLGVVPVINENDTVVTDEIRFGDNDTLAALVANLVEADLLVILTDRDGMFDADPRNNPEAQLIYEARADDPSLDAVAGGTGGALGRGGMQTKLRAARLAARSGAHTIIIGGRIERVLDRLKAGERLGTLLSPERGMLAARKQWLAGHLQTRGTLVLDAGAVQALRQANKSLLPVGVKTVQGSFRRGEMVVCVGPDGIEVARGLANYSALEAQKIIGQPSDAIESILGYSAEPELVHRDNLVLV.

Lys14 contacts ATP. 3 residues coordinate substrate: Ser54, Asp141, and Asn153. Position 173-174 (173-174 (TD)) interacts with ATP. The region spanning 280-358 (RGTLVLDAGA…DAIESILGYS (79 aa)) is the PUA domain.

The protein belongs to the glutamate 5-kinase family.

It localises to the cytoplasm. The enzyme catalyses L-glutamate + ATP = L-glutamyl 5-phosphate + ADP. The protein operates within amino-acid biosynthesis; L-proline biosynthesis; L-glutamate 5-semialdehyde from L-glutamate: step 1/2. Its function is as follows. Catalyzes the transfer of a phosphate group to glutamate to form L-glutamate 5-phosphate. This Pseudomonas putida (strain GB-1) protein is Glutamate 5-kinase.